The chain runs to 389 residues: tRNA (guanine-N(7)-)-methyltransferase non-catalytic subunit TRM82 (389 aa).

WD repeat units lie at residues 44-86 (QNVP…HQLK), 134-179 (GHTS…KGFL), and 184-222 (QFVS…LITE).

The protein belongs to the WD repeat TRM82 family. Forms a heterodimer with the catalytic subunit TRM8.

It is found in the nucleus. It functions in the pathway tRNA modification; N(7)-methylguanine-tRNA biosynthesis. Required for the formation of N(7)-methylguanine at position 46 (m7G46) in tRNA. In the complex, it is required to stabilize and induce conformational changes of the catalytic subunit. The polypeptide is tRNA (guanine-N(7)-)-methyltransferase non-catalytic subunit TRM82 (Lodderomyces elongisporus (strain ATCC 11503 / CBS 2605 / JCM 1781 / NBRC 1676 / NRRL YB-4239) (Yeast)).